A 491-amino-acid polypeptide reads, in one-letter code: Iota-carrageenase (491 aa).

The N-terminal stretch at Met1 to Ala23 is a signal peptide. 4 disulfide bridges follow: Cys269-Cys298, Cys336-Cys360, Cys408-Cys476, and Cys412-Cys484.

Belongs to the glycosyl hydrolase 82 family.

The protein localises to the secreted. The catalysed reaction is Endohydrolysis of 1,4-beta-D-linkages between D-galactose 4-sulfate and 3,6-anhydro-D-galactose-2-sulfate in iota-carrageenans.. In terms of biological role, hydrolyzes iota-carrageenans, sulfated 1,3-alpha-1,4-beta galactans from red algal cell walls, with an inversion of anomeric configuration. Also active against hybrid iota-/nu-carrageenan, not active against kappa- or lambda-carrageenans. In Alteromonas macleodii (Pseudoalteromonas macleodii), this protein is Iota-carrageenase.